The following is a 433-amino-acid chain: MTTLDKNIVQINGPVNIARLEGQINGFNKVVYLFMDHHIPVQFQTECDNIFARDVQTFLAESFRNIGETGLMYDFFIEERPESIINEDSKTTNSRKEGYIWEVVKMFNKVFKFDPKENKVMSSNVFENVRFHYADIREYIYLDTLNLYNDIRNLLQEMQENNFMDPYILEHIVNILSNIFEKNKSVIDIMNSFEKNSEANSVNKITPLKYPKVYEDTNIPLTNKEPNKDASTLEKQKNLRTDYLKYFLNKLYNSYKDKNIKSKLLLELRQLKNNITNLQNKITKTMDNVKKIIEEIEQSKNKVTLTDYSFFMGISPLETRIYIANLINQISILATANIIENIGFMDIFFLRRFLDKDYITNAIIYSGSLHSANYMKILVKEFDFKVTHISKSQYPIDKLNDSIKERNNLAEIVYLAGSYTQCSDITNFPKNFQ.

Positions 258 to 304 (KNIKSKLLLELRQLKNNITNLQNKITKTMDNVKKIIEEIEQSKNKVT) form a coiled coil.

Belongs to the mimivirus R160 family.

The protein localises to the virion. This is an uncharacterized protein from Acanthamoeba polyphaga mimivirus (APMV).